The chain runs to 353 residues: Ribosome biogenesis protein BRX1 homolog (353 aa).

Residues 1-10 (MAATKRKRRG) show a composition bias toward basic residues. The segment at 1-46 (MAATKRKRRGGFAVQAKKPKRNEIDAEPPAKRHATAEEVEEEERDR) is disordered. Basic and acidic residues predominate over residues 21-36 (RNEIDAEPPAKRHATA). Residues 60 to 249 (ERILIFSSRG…LIKIFQGSFG (190 aa)) form the Brix domain. Lys-160 participates in a covalent cross-link: Glycyl lysine isopeptide (Lys-Gly) (interchain with G-Cter in SUMO2). Residue Ser-261 is modified to Phosphoserine. Lys-276 carries the N6-acetyllysine modification. Residues Lys-314 and Lys-322 each participate in a glycyl lysine isopeptide (Lys-Gly) (interchain with G-Cter in SUMO2) cross-link.

It belongs to the BRX1 family.

It is found in the nucleus. The protein resides in the nucleolus. Its function is as follows. Required for biogenesis of the 60S ribosomal subunit. The polypeptide is Ribosome biogenesis protein BRX1 homolog (BRIX1) (Homo sapiens (Human)).